Reading from the N-terminus, the 89-residue chain is MSKKCALTGRKPRRGYSYAIRGISKKKKGIGLKVTGRTKRRFFPNMMTKRLWSTEENRFLKLKISAAALRLVDKLGLDQVVARAKSKGF.

Belongs to the bacterial ribosomal protein bL28 family.

This Chlamydia trachomatis serovar L2 (strain ATCC VR-902B / DSM 19102 / 434/Bu) protein is Large ribosomal subunit protein bL28.